A 367-amino-acid chain; its full sequence is Mitogen-activated protein kinase 12 (367 aa).

The Protein kinase domain occupies 27–311 (YRDLQPVGSG…AGEALAHPYF (285 aa)). Residues 33-41 (VGSGAYGAV) and K56 each bind ATP. D153 serves as the catalytic Proton acceptor. T183 is modified (phosphothreonine; by MAP2K3 and MAP2K6). Residues 183–185 (TGY) carry the TXY motif. Position 185 is a phosphotyrosine (Y185).

Belongs to the protein kinase superfamily. CMGC Ser/Thr protein kinase family. MAP kinase subfamily. In terms of assembly, monomer. Interacts with the PDZ domain of the syntrophin SNTA1. Interacts with SH3BP5. Interacts with LIN7C, SCRIB and SYNJ2BP. Interacts with PTPN4; this interaction induces the activation of PTPN4 phosphatase activity. Mg(2+) is required as a cofactor. Post-translationally, dually phosphorylated on Thr-183 and Tyr-185 by MAP2K3/MKK3 and MAP2K6/MKK6, which activates the enzyme. Ubiquitinated. Ubiquitination leads to degradation by the proteasome pathway. Highly expressed in skeletal muscle and heart.

Its subcellular location is the cytoplasm. The protein localises to the nucleus. It localises to the mitochondrion. The catalysed reaction is L-seryl-[protein] + ATP = O-phospho-L-seryl-[protein] + ADP + H(+). It catalyses the reaction L-threonyl-[protein] + ATP = O-phospho-L-threonyl-[protein] + ADP + H(+). Its activity is regulated as follows. Activated by phosphorylation on threonine and tyrosine. MAP2K3/MKK3 and MAP2K6/MKK6 are both essential for the activation of MAPK12 induced by environmental stress, whereas MAP2K6/MKK6 is the major MAPK12 activator in response to TNF-alpha. Serine/threonine kinase which acts as an essential component of the MAP kinase signal transduction pathway. MAPK12 is one of the four p38 MAPKs which play an important role in the cascades of cellular responses evoked by extracellular stimuli such as pro-inflammatory cytokines or physical stress leading to direct activation of transcription factors such as ELK1 and ATF2. Accordingly, p38 MAPKs phosphorylate a broad range of proteins and it has been estimated that they may have approximately 200 to 300 substrates each. Some of the targets are downstream kinases such as MAPKAPK2, which are activated through phosphorylation and further phosphorylate additional targets. Plays a role in myoblast differentiation and also in the down-regulation of cyclin D1 in response to hypoxia in adrenal cells suggesting MAPK12 may inhibit cell proliferation while promoting differentiation. Phosphorylates DLG1. Following osmotic shock, MAPK12 in the cell nucleus increases its association with nuclear DLG1, thereby causing dissociation of DLG1-SFPQ complexes. This function is independent of its catalytic activity and could affect mRNA processing and/or gene transcription to aid cell adaptation to osmolarity changes in the environment. Regulates UV-induced checkpoint signaling and repair of UV-induced DNA damage and G2 arrest after gamma-radiation exposure. MAPK12 is involved in the regulation of SLC2A1 expression and basal glucose uptake in L6 myotubes; and negatively regulates SLC2A4 expression and contraction-mediated glucose uptake in adult skeletal muscle. C-Jun (JUN) phosphorylation is stimulated by MAPK14 and inhibited by MAPK12, leading to a distinct AP-1 regulation. MAPK12 is required for the normal kinetochore localization of PLK1, prevents chromosomal instability and supports mitotic cell viability. MAPK12-signaling is also positively regulating the expansion of transient amplifying myogenic precursor cells during muscle growth and regeneration. This chain is Mitogen-activated protein kinase 12 (MAPK12), found in Homo sapiens (Human).